The following is a 534-amino-acid chain: 26S proteasome non-ATPase regulatory subunit 3 (534 aa).

The span at 1–16 shows a compositional bias: basic and acidic residues; sequence MKQEGSARRRGADKAK. The segment at 1 to 68 is disordered; it reads MKQEGSARRR…AAEHSQRELD (68 aa). The span at 17-32 shows a compositional bias: pro residues; that stretch reads PPPGGGEQEPPPPPAP. Residue Lys38 forms a Glycyl lysine isopeptide (Lys-Gly) (interchain with G-Cter in SUMO1); alternate linkage. Lys38 is covalently cross-linked (Glycyl lysine isopeptide (Lys-Gly) (interchain with G-Cter in SUMO2); alternate). Residues 49 to 61 show a composition bias toward low complexity; that stretch reads GETAGKTAAAAAE. Residues 286–465 enclose the PCI domain; it reads ARYLYYTGRI…GYVQSKEMID (180 aa). Phosphoserine is present on residues Ser418 and Ser430. The disordered stretch occupies residues 500 to 534; it reads SYNKDLESAEERREREQQDLEFAKEMAEDDDDSFP. The span at 501 to 525 shows a compositional bias: basic and acidic residues; sequence YNKDLESAEERREREQQDLEFAKEM.

This sequence belongs to the proteasome subunit S3 family. As to quaternary structure, component of the 19S proteasome regulatory particle complex. The 26S proteasome consists of a 20S core particle (CP) and two 19S regulatory subunits (RP). The regulatory particle is made of a lid composed of 9 subunits including PSMD3, a base containing 6 ATPases and few additional components. Interacts with UBQLN1 (via ubiquitin-like domain). Interacts with ERCC6.

Component of the 26S proteasome, a multiprotein complex involved in the ATP-dependent degradation of ubiquitinated proteins. This complex plays a key role in the maintenance of protein homeostasis by removing misfolded or damaged proteins, which could impair cellular functions, and by removing proteins whose functions are no longer required. Therefore, the proteasome participates in numerous cellular processes, including cell cycle progression, apoptosis, or DNA damage repair. In Bos taurus (Bovine), this protein is 26S proteasome non-ATPase regulatory subunit 3 (PSMD3).